Reading from the N-terminus, the 845-residue chain is Protein SPA1-RELATED 3 (845 aa).

Residues 1–19 (MEGSSNSNSRGFNTSGVSD) show a composition bias toward polar residues. Disordered regions lie at residues 1–33 (MEGSSNSNSRGFNTSGVSDRNTEFLPVERLTTR) and 139–158 (CSDSGSDSLEDGPISQKEIG). A Protein kinase domain is found at 1-297 (MEGSSNSNSR…MSDLLQSEFI (297 aa)). The stretch at 301–329 (RDNLEEREAAIELRDRIEEQESLLEFLLL) forms a coiled coil. 7 WD repeats span residues 532 to 571 (NSSNLVCALAFDREGELFATAGVNKKIKIFECNSIVNDNR), 581 to 621 (AGRS…LVTE), 624 to 664 (EHKK…SIGT), 666 to 706 (KTKA…IPLC), 710 to 748 (GHSKTVSYVKFVDSSTLVSSSTDNTLKLWDLSMSASGIN), 757 to 796 (GHTNLKNFVGLSVSDGYIATGSETNEVFVYHKAFPMPVMS), and 812 to 845 (DASQFISSICWRGQSSTLVAANSNGNIKILEMMT). The DWD box signature appears at 685–699 (AFGSADHKVYYYDLR).

Interacts with COP1 and CO.

It is found in the nucleus. In terms of biological role, repressor of photomorphogenesis in the light. Probably part of the COP1/SPA E3 ubiquitin-protein ligase complex. The chain is Protein SPA1-RELATED 3 (SPA3) from Arabidopsis thaliana (Mouse-ear cress).